The sequence spans 328 residues: Sin3 histone deacetylase corepressor complex component SDS3 (328 aa).

A disordered region spans residues 1 to 64; sequence MSAAALLAPA…TDLAKHDEED (64 aa). N-acetylserine is present on S2. A mediates interaction with USP17L2 region spans residues 2 to 170; that stretch reads SAAALLAPAP…IENEKLTMEL (169 aa). The segment covering 10 to 21 has biased composition (pro residues); that stretch reads APAPAGAPPAPE. Acidic residues-rich tracts occupy residues 23 to 37 and 45 to 54; these read YPEE…EDDE and SDEDTEDASE. S32 and S45 each carry phosphoserine. T49 is modified (phosphothreonine). Position 53 is a phosphoserine (S53). Positions 64-171 form a coiled coil; the sequence is DFVEMKEQMY…ENEKLTMELT (108 aa). Glycyl lysine isopeptide (Lys-Gly) (interchain with G-Cter in SUMO2) cross-links involve residues K69, K178, and K201. Positions 226-252 are disordered; it reads LKSPKRPASPSSPEHLPTTPAESPAQR. Phosphoserine occurs at positions 228, 234, and 237. T244 carries the post-translational modification Phosphothreonine.

It belongs to the SDS3 family. As to quaternary structure, homodimer. Component of the SIN3 histone deacetylase (HDAC) corepressor complex. Interacts with SIN3A. Interaction with SIN3B enhances the interaction between SIN3B and HDAC1 to form a complex. Interacts with HCFC1. Component of a mSin3A corepressor complex that contains SIN3A, SAP130, SUDS3/SAP45, ARID4B/SAP180, HDAC1 and HDAC2. Interacts with USP17L2; the interaction is direct. Interacts with FOXK2. Polyubiquitinated. 'Lys-63'-polyubiquitinated SUDS3 positively regulates histone deacetylation. Regulated through deubiquitination by USP17L2/USP17 that cleaves 'Lys-63'-linked ubiquitin chains.

The protein resides in the nucleus. Regulatory protein which represses transcription and augments histone deacetylase activity of HDAC1. May have a potential role in tumor suppressor pathways through regulation of apoptosis. May function in the assembly and/or enzymatic activity of the mSin3A corepressor complex or in mediating interactions between the complex and other regulatory complexes. The protein is Sin3 histone deacetylase corepressor complex component SDS3 (SUDS3) of Bos taurus (Bovine).